A 669-amino-acid chain; its full sequence is UvrABC system protein C (669 aa).

Residues 14 to 91 (DSPGCYLHKD…IQRYKPKYNI (78 aa)) form the GIY-YIG domain. Residues 196-231 (KKIVKELEGKMISASDNMEFEQAAEYRDVIKAIGTL) form the UVR domain. A disordered region spans residues 647–669 (PHKSDENWESIKDNVPLLKSEKS). A compositionally biased stretch (basic and acidic residues) spans 648 to 658 (HKSDENWESIK).

The protein belongs to the UvrC family. As to quaternary structure, interacts with UvrB in an incision complex.

It localises to the cytoplasm. In terms of biological role, the UvrABC repair system catalyzes the recognition and processing of DNA lesions. UvrC both incises the 5' and 3' sides of the lesion. The N-terminal half is responsible for the 3' incision and the C-terminal half is responsible for the 5' incision. The protein is UvrABC system protein C of Lactococcus lactis subsp. cremoris (strain MG1363).